Consider the following 428-residue polypeptide: MKIATIKTGLASLAMLPGLVMAAPAVADKADNAFMMICTALVLFMTIPGIALFYGGLIRGKNVLSMLTQVTVTFALVCILWVVYGYSLAFGEGNNFFGNINWLMLKNIELTAVMGSIYQYIHVAFQGSFACITVGLIVGALAERIRFSAVLIFVVVWLTLSYIPIAHMVWGGGLLASHGALDFAGGTVVHINAAIAGLVGAYLIGKRVGFGKEAFKPHNLPMVFTGTAILYIGWFGFNAGSAGTANEIAALAFVNTVVATAAAILGWIFGEWALRGKPSLLGACSGAIAGLVGVTPACGYIGVGGALIIGVVAGLAGLWGVTMLKRLLRVDDPCDVFGVHGVCGIVGCIMTGIFAASSLGGVGFAEGVTMGHQLLVQLESIAITIVWSGVVAFIGYKLADLTVGLRVPEEQEREGLDVNSHGENAYNA.

The first 22 residues, 1-22 (MKIATIKTGLASLAMLPGLVMA), serve as a signal peptide directing secretion. At 23 to 32 (APAVADKADN) the chain is on the periplasmic side. Residues 33–54 (AFMMICTALVLFMTIPGIALFY) form a helical membrane-spanning segment. The Cytoplasmic portion of the chain corresponds to 55–65 (GGLIRGKNVLS). A helical membrane pass occupies residues 66-90 (MLTQVTVTFALVCILWVVYGYSLAF). At 91-119 (GEGNNFFGNINWLMLKNIELTAVMGSIYQ) the chain is on the periplasmic side. A helical transmembrane segment spans residues 120–142 (YIHVAFQGSFACITVGLIVGALA). Topologically, residues 143 to 146 (ERIR) are cytoplasmic. A helical transmembrane segment spans residues 147-171 (FSAVLIFVVVWLTLSYIPIAHMVWG). Residues 172–185 (GGLLASHGALDFAG) lie on the Periplasmic side of the membrane. Residues 186–201 (GTVVHINAAIAGLVGA) traverse the membrane as a helical segment. Residues 202 to 221 (YLIGKRVGFGKEAFKPHNLP) lie on the Cytoplasmic side of the membrane. The chain crosses the membrane as a helical span at residues 222–241 (MVFTGTAILYIGWFGFNAGS). Ser-241 provides a ligand contact to NH4(+). At 242-248 (AGTANEI) the chain is on the periplasmic side. The helical transmembrane segment at 249–273 (AALAFVNTVVATAAAILGWIFGEWA) threads the bilayer. Over 274–279 (LRGKPS) the chain is Cytoplasmic. A helical transmembrane segment spans residues 280–300 (LLGACSGAIAGLVGVTPACGY). The Periplasmic segment spans residues 301-302 (IG). The helical transmembrane segment at 303–321 (VGGALIIGVVAGLAGLWGV) threads the bilayer. The Cytoplasmic segment spans residues 322-333 (TMLKRLLRVDDP). A helical transmembrane segment spans residues 334–355 (CDVFGVHGVCGIVGCIMTGIFA). Residues 356–370 (ASSLGGVGFAEGVTM) are Periplasmic-facing. A helical transmembrane segment spans residues 371-399 (GHQLLVQLESIAITIVWSGVVAFIGYKLA). At 400–428 (DLTVGLRVPEEQEREGLDVNSHGENAYNA) the chain is on the cytoplasmic side.

This sequence belongs to the ammonia transporter channel (TC 1.A.11.2) family. As to quaternary structure, homotrimer. In response to elevation of the extracellular ammonium concentration, interacts and forms a complex with GlnK.

The protein resides in the cell inner membrane. With respect to regulation, in the presence of high extracellular ammonium concentrations, transport activity is inhibited by interaction with the regulatory protein GlnK. Formation of the GlnK-AmtB complex is influenced by intracellular pools of the effector molecules ATP, ADP, Mg(2+) and 2-oxoglutarate. The GlnK-AmtB interaction is also controlled by the level of intracellular glutamine and the uridylylation status of GlnK. Functionally, involved in the uptake of ammonium/ammonia (NH(4)(+)/NH(3)). Transport is electrogenic. Following sequestration of NH(4)(+) at the periplasmic face, NH(4)(+) is deprotonated and neutral NH(3) is transported into the cytoplasm. Neutral NH(3) and charged H(+) are carried separately across the membrane on a unique two-lane pathway, before recombining to NH(4)(+) inside the cell. The polypeptide is Ammonium transporter AmtB (amtB) (Escherichia coli O157:H7).